The following is a 446-amino-acid chain: tRNA-2-methylthio-N(6)-dimethylallyladenosine synthase (446 aa).

Residues 3–120 (KKIYIKTFGC…LPEMLKQRRS (118 aa)) form the MTTase N-terminal domain. 6 residues coordinate [4Fe-4S] cluster: C12, C49, C83, C157, C161, and C164. The 233-residue stretch at 143–375 (KVEGATAFVS…QAVIDQNTRR (233 aa)) folds into the Radical SAM core domain. Residues 378–444 (DEMVGTVQRI…AYTLRGEIIV (67 aa)) form the TRAM domain.

This sequence belongs to the methylthiotransferase family. MiaB subfamily. As to quaternary structure, monomer. It depends on [4Fe-4S] cluster as a cofactor.

The protein localises to the cytoplasm. The catalysed reaction is N(6)-dimethylallyladenosine(37) in tRNA + (sulfur carrier)-SH + AH2 + 2 S-adenosyl-L-methionine = 2-methylsulfanyl-N(6)-dimethylallyladenosine(37) in tRNA + (sulfur carrier)-H + 5'-deoxyadenosine + L-methionine + A + S-adenosyl-L-homocysteine + 2 H(+). Its function is as follows. Catalyzes the methylthiolation of N6-(dimethylallyl)adenosine (i(6)A), leading to the formation of 2-methylthio-N6-(dimethylallyl)adenosine (ms(2)i(6)A) at position 37 in tRNAs that read codons beginning with uridine. This is tRNA-2-methylthio-N(6)-dimethylallyladenosine synthase from Janthinobacterium sp. (strain Marseille) (Minibacterium massiliensis).